We begin with the raw amino-acid sequence, 319 residues long: ATP-dependent 6-phosphofructokinase (319 aa).

Glycine 11 contributes to the ATP binding site. 21-25 (RAVTR) contacts ADP. ATP is bound by residues 72–73 (RF) and 102–105 (GDGS). A Mg(2+)-binding site is contributed by aspartate 103. 125-127 (SID) contributes to the substrate binding site. Aspartate 127 acts as the Proton acceptor in catalysis. Arginine 154 serves as a coordination point for ADP. Substrate-binding positions include arginine 162 and 169–171 (MGR). Residues 185–187 (GAD) and 213–215 (KKH) contribute to the ADP site. Substrate-binding positions include glutamate 222, arginine 243, and 249 to 252 (HMQR).

It belongs to the phosphofructokinase type A (PFKA) family. ATP-dependent PFK group I subfamily. Prokaryotic clade 'B1' sub-subfamily. Homotetramer. It depends on Mg(2+) as a cofactor.

Its subcellular location is the cytoplasm. It carries out the reaction beta-D-fructose 6-phosphate + ATP = beta-D-fructose 1,6-bisphosphate + ADP + H(+). It participates in carbohydrate degradation; glycolysis; D-glyceraldehyde 3-phosphate and glycerone phosphate from D-glucose: step 3/4. Its activity is regulated as follows. Allosterically activated by ADP and other diphosphonucleosides, and allosterically inhibited by phosphoenolpyruvate. In terms of biological role, catalyzes the phosphorylation of D-fructose 6-phosphate to fructose 1,6-bisphosphate by ATP, the first committing step of glycolysis. This is ATP-dependent 6-phosphofructokinase from Lactobacillus johnsonii (strain CNCM I-12250 / La1 / NCC 533).